We begin with the raw amino-acid sequence, 245 residues long: Putative protein phosphatase 2C-like protein 45 (245 aa).

Positions 1–188 (MEDRFSTITN…DDISVMLIPL (188 aa)) constitute a PPM-type phosphatase domain.

This sequence belongs to the PP2C family.

The sequence is that of Putative protein phosphatase 2C-like protein 45 from Arabidopsis thaliana (Mouse-ear cress).